The chain runs to 506 residues: Histidine--tRNA ligase, mitochondrial (506 aa).

The N-terminal 33 residues, 1–33 (MHLLGLLPRRAWASLLSQLLRPPWASCTGAVRC), are a transit peptide targeting the mitochondrion. At serine 67 the chain carries Phosphoserine. L-histidine is bound by residues 131-133 (DLT), arginine 158, glutamine 174, aspartate 178, arginine 327, and 331-332 (YY). Lysine 444 carries the N6-acetyllysine modification.

The protein belongs to the class-II aminoacyl-tRNA synthetase family. Homodimer.

The protein localises to the mitochondrion. The enzyme catalyses tRNA(His) + L-histidine + ATP = L-histidyl-tRNA(His) + AMP + diphosphate + H(+). Functionally, mitochondrial aminoacyl-tRNA synthetase that catalyzes the ATP-dependent ligation of histidine to the 3'-end of its cognate tRNA, via the formation of an aminoacyl-adenylate intermediate (His-AMP). This Pongo abelii (Sumatran orangutan) protein is Histidine--tRNA ligase, mitochondrial (HARS2).